A 95-amino-acid polypeptide reads, in one-letter code: Integration host factor subunit beta (95 aa).

It belongs to the bacterial histone-like protein family. In terms of assembly, heterodimer of an alpha and a beta chain.

Functionally, this protein is one of the two subunits of integration host factor, a specific DNA-binding protein that functions in genetic recombination as well as in transcriptional and translational control. This Shewanella amazonensis (strain ATCC BAA-1098 / SB2B) protein is Integration host factor subunit beta.